Here is a 514-residue protein sequence, read N- to C-terminus: Tryptophan decarboxylase 1 (514 aa).

F104 lines the serotonin pocket. Residues T175 and S176 each coordinate pyridoxal 5'-phosphate. Serotonin is bound at residue H214. T273 is a pyridoxal 5'-phosphate binding site. K330 carries the N6-(pyridoxal phosphate)lysine modification. Y359 (proton donor) is an active-site residue. Residues V380 and G381 each coordinate pyridoxal 5'-phosphate.

Belongs to the group II decarboxylase family. Forms homodimers. The cofactor is pyridoxal 5'-phosphate.

It carries out the reaction L-tryptophan + H(+) = tryptamine + CO2. The catalysed reaction is 5-hydroxy-L-tryptophan + H(+) = serotonin + CO2. Functionally, involved in serotonin biosynthesis. Catalyzes the decarboxylation of L-tryptophan to produce tryptamine, which is converted to serotonin by tryptamine 5-hydroxylase. May play a major role in serotonin biosynthesis during senescence. Accumulation of serotonin attenuates leaf senescence. Catalyzes the decarboxylation of 5-hydroxy-L-tryptophan to produce serotonin. In Oryza sativa subsp. japonica (Rice), this protein is Tryptophan decarboxylase 1.